The sequence spans 418 residues: Inner capsid protein sigma-2 (418 aa).

Belongs to the orthoreovirus sigma-1 protein family. As to quaternary structure, interacts with protein mu-NS; in viral inclusions.

It localises to the virion. Functionally, inner capsid (core) component. The sequence is that of Inner capsid protein sigma-2 (S2) from Mammalia (T2J).